Reading from the N-terminus, the 141-residue chain is Large ribosomal subunit protein uL11 (141 aa).

It belongs to the universal ribosomal protein uL11 family. Part of the ribosomal stalk of the 50S ribosomal subunit. Interacts with L10 and the large rRNA to form the base of the stalk. L10 forms an elongated spine to which L12 dimers bind in a sequential fashion forming a multimeric L10(L12)X complex. Post-translationally, one or more lysine residues are methylated.

Forms part of the ribosomal stalk which helps the ribosome interact with GTP-bound translation factors. The chain is Large ribosomal subunit protein uL11 from Campylobacter concisus (strain 13826).